A 500-amino-acid chain; its full sequence is MPVQTAVVVLAAGAGTRMRSKTPKVLHTLGGRTMLAHSLYAAAEVDPTHLVTVVGHDKERVGVAVSALEAELGRPIAIAVQDEQNGTGHAVECGLSALPADFRGTVLVTAADVPLLDGRTLHALVDEHHSEPTPSAVTVLTFTAPEPRGYGRIVRLPHDGEIAEIVEEADATEEQAAITEVNAGVYAFDAEFLRSALGQLNANNAQGELYLTDVVKIAREAGAPVFAAHLADSAKVAGANDRVQLSRLAAELNRRTVENWMRAGVTVVDPSTTWIDVGVTLARDVTIHPGVQLLGTTAVGEDAVIGPDTTLTDVTVGEGASVVRTHGSESTIGAGATVGPFSYLRPGTVLGASGKLGAFVETKNADIGAHTKVPHLTYVGDATIGEYSNIGASSVFVNYDGVAKSRTVVGSHVRTGSDTMFVAPVQVGDGAYTGAGTVLRFDVPPGALAVSGGKQRNIDGWVQRNRPGTAAAEAAAAAGLHHSSDLHETEKQDLKDGIEQ.

A pyrophosphorylase region spans residues 1–242 (MPVQTAVVVL…SAKVAGANDR (242 aa)). Residues 10–13 (LAAG), Lys24, Gln81, and 86–87 (GT) contribute to the UDP-N-acetyl-alpha-D-glucosamine site. Asp112 is a binding site for Mg(2+). UDP-N-acetyl-alpha-D-glucosamine is bound by residues Gly151, Glu167, Asn182, and Asn240. Asn240 serves as a coordination point for Mg(2+). The segment at 243–263 (VQLSRLAAELNRRTVENWMRA) is linker. The interval 264-500 (GVTVVDPSTT…KQDLKDGIEQ (237 aa)) is N-acetyltransferase. The UDP-N-acetyl-alpha-D-glucosamine site is built by Arg345 and Lys363. His375 (proton acceptor) is an active-site residue. Tyr378 and Asn389 together coordinate UDP-N-acetyl-alpha-D-glucosamine. Acetyl-CoA is bound by residues Ala392, 398-399 (NY), Ser417, and Ala435. The disordered stretch occupies residues 472–500 (AEAAAAAGLHHSSDLHETEKQDLKDGIEQ). Over residues 482–500 (HSSDLHETEKQDLKDGIEQ) the composition is skewed to basic and acidic residues.

In the N-terminal section; belongs to the N-acetylglucosamine-1-phosphate uridyltransferase family. It in the C-terminal section; belongs to the transferase hexapeptide repeat family. In terms of assembly, homotrimer. Requires Mg(2+) as cofactor.

It is found in the cytoplasm. It carries out the reaction alpha-D-glucosamine 1-phosphate + acetyl-CoA = N-acetyl-alpha-D-glucosamine 1-phosphate + CoA + H(+). The catalysed reaction is N-acetyl-alpha-D-glucosamine 1-phosphate + UTP + H(+) = UDP-N-acetyl-alpha-D-glucosamine + diphosphate. It functions in the pathway nucleotide-sugar biosynthesis; UDP-N-acetyl-alpha-D-glucosamine biosynthesis; N-acetyl-alpha-D-glucosamine 1-phosphate from alpha-D-glucosamine 6-phosphate (route II): step 2/2. Its pathway is nucleotide-sugar biosynthesis; UDP-N-acetyl-alpha-D-glucosamine biosynthesis; UDP-N-acetyl-alpha-D-glucosamine from N-acetyl-alpha-D-glucosamine 1-phosphate: step 1/1. It participates in bacterial outer membrane biogenesis; LPS lipid A biosynthesis. Catalyzes the last two sequential reactions in the de novo biosynthetic pathway for UDP-N-acetylglucosamine (UDP-GlcNAc). The C-terminal domain catalyzes the transfer of acetyl group from acetyl coenzyme A to glucosamine-1-phosphate (GlcN-1-P) to produce N-acetylglucosamine-1-phosphate (GlcNAc-1-P), which is converted into UDP-GlcNAc by the transfer of uridine 5-monophosphate (from uridine 5-triphosphate), a reaction catalyzed by the N-terminal domain. In Rhodococcus jostii (strain RHA1), this protein is Bifunctional protein GlmU.